Consider the following 180-residue polypeptide: Large ribosomal subunit protein uL6 (180 aa).

The protein belongs to the universal ribosomal protein uL6 family. Part of the 50S ribosomal subunit.

This protein binds to the 23S rRNA, and is important in its secondary structure. It is located near the subunit interface in the base of the L7/L12 stalk, and near the tRNA binding site of the peptidyltransferase center. The sequence is that of Large ribosomal subunit protein uL6 from Clostridium beijerinckii (strain ATCC 51743 / NCIMB 8052) (Clostridium acetobutylicum).